The following is a 127-amino-acid chain: Small ribosomal subunit protein uS11 (127 aa).

This sequence belongs to the universal ribosomal protein uS11 family. Part of the 30S ribosomal subunit. Interacts with proteins S7 and S18. Binds to IF-3.

In terms of biological role, located on the platform of the 30S subunit, it bridges several disparate RNA helices of the 16S rRNA. Forms part of the Shine-Dalgarno cleft in the 70S ribosome. This chain is Small ribosomal subunit protein uS11, found in Chlorobium phaeobacteroides (strain BS1).